An 89-amino-acid polypeptide reads, in one-letter code: Large ribosomal subunit protein eL34 (89 aa).

The interval 1–22 (MPAPRYKSGSSKKVYRKAPGNS) is disordered.

Belongs to the eukaryotic ribosomal protein eL34 family.

This is Large ribosomal subunit protein eL34 from Methanococcus maripaludis (strain C5 / ATCC BAA-1333).